We begin with the raw amino-acid sequence, 291 residues long: Elongation factor Ts (291 aa).

The interval 84 to 87 (TDFV) is involved in Mg(2+) ion dislocation from EF-Tu.

Belongs to the EF-Ts family.

The protein localises to the cytoplasm. Associates with the EF-Tu.GDP complex and induces the exchange of GDP to GTP. It remains bound to the aminoacyl-tRNA.EF-Tu.GTP complex up to the GTP hydrolysis stage on the ribosome. In Bifidobacterium adolescentis (strain ATCC 15703 / DSM 20083 / NCTC 11814 / E194a), this protein is Elongation factor Ts.